A 446-amino-acid polypeptide reads, in one-letter code: N-succinylarginine dihydrolase (446 aa).

Residues 19–28, asparagine 110, and 137–138 each bind substrate; these read AGLSFGNVAS and HR. Residue glutamate 174 is part of the active site. Arginine 213 lines the substrate pocket. The active site involves histidine 249. 2 residues coordinate substrate: aspartate 251 and asparagine 364. Catalysis depends on cysteine 370, which acts as the Nucleophile.

This sequence belongs to the succinylarginine dihydrolase family. Homodimer.

The catalysed reaction is N(2)-succinyl-L-arginine + 2 H2O + 2 H(+) = N(2)-succinyl-L-ornithine + 2 NH4(+) + CO2. It participates in amino-acid degradation; L-arginine degradation via AST pathway; L-glutamate and succinate from L-arginine: step 2/5. Its function is as follows. Catalyzes the hydrolysis of N(2)-succinylarginine into N(2)-succinylornithine, ammonia and CO(2). This chain is N-succinylarginine dihydrolase, found in Burkholderia orbicola (strain MC0-3).